Reading from the N-terminus, the 215-residue chain is 3-demethoxyubiquinol 3-hydroxylase (215 aa).

Glutamate 64, glutamate 94, histidine 97, glutamate 146, glutamate 178, and histidine 181 together coordinate Fe cation.

It belongs to the COQ7 family. The cofactor is Fe cation.

It localises to the cell membrane. The enzyme catalyses a 5-methoxy-2-methyl-3-(all-trans-polyprenyl)benzene-1,4-diol + AH2 + O2 = a 3-demethylubiquinol + A + H2O. The protein operates within cofactor biosynthesis; ubiquinone biosynthesis. In terms of biological role, catalyzes the hydroxylation of 2-nonaprenyl-3-methyl-6-methoxy-1,4-benzoquinol during ubiquinone biosynthesis. In Ectopseudomonas mendocina (strain ymp) (Pseudomonas mendocina), this protein is 3-demethoxyubiquinol 3-hydroxylase.